The following is a 695-amino-acid chain: Elongation factor G (695 aa).

Residues 10-285 (AKTRNIGIMA…AVIDYLPSPI (276 aa)) form the tr-type G domain. GTP-binding positions include 19 to 26 (AHIDAGKT), 83 to 87 (DTPGH), and 137 to 140 (NKMD).

It belongs to the TRAFAC class translation factor GTPase superfamily. Classic translation factor GTPase family. EF-G/EF-2 subfamily.

The protein resides in the cytoplasm. Catalyzes the GTP-dependent ribosomal translocation step during translation elongation. During this step, the ribosome changes from the pre-translocational (PRE) to the post-translocational (POST) state as the newly formed A-site-bound peptidyl-tRNA and P-site-bound deacylated tRNA move to the P and E sites, respectively. Catalyzes the coordinated movement of the two tRNA molecules, the mRNA and conformational changes in the ribosome. In Limosilactobacillus reuteri (strain DSM 20016) (Lactobacillus reuteri), this protein is Elongation factor G.